The sequence spans 457 residues: Argininosuccinate lyase (457 aa).

This sequence belongs to the lyase 1 family. Argininosuccinate lyase subfamily.

The protein localises to the cytoplasm. It catalyses the reaction 2-(N(omega)-L-arginino)succinate = fumarate + L-arginine. Its pathway is amino-acid biosynthesis; L-arginine biosynthesis; L-arginine from L-ornithine and carbamoyl phosphate: step 3/3. The protein is Argininosuccinate lyase of Salmonella arizonae (strain ATCC BAA-731 / CDC346-86 / RSK2980).